The chain runs to 182 residues: Phospholipase A2 inhibitor gamma subunit A (182 aa).

Disulfide bonds link Cys-3-Cys-27, Cys-6-Cys-13, Cys-20-Cys-48, Cys-54-Cys-75, Cys-76-Cys-81, Cys-99-Cys-124, Cys-117-Cys-146, and Cys-150-Cys-172. N-linked (GlcNAc...) asparagine glycosylation occurs at Asn-157.

This sequence belongs to the CNF-like-inhibitor family. As to quaternary structure, heterotrimer of 2 subunits A and 1 subunit B. N-glycosylation is not important for activity, since deglycosylation does not change its PLA2 inhibitory activity. In terms of tissue distribution, expressed by the liver.

Its subcellular location is the secreted. Its function is as follows. Strongly inhibits its own venom PLA2 and all other PLA2s tested including Elapid, Crotalid and Viperid venom PLA2s, as well as honeybee PLA2s. The chain is Phospholipase A2 inhibitor gamma subunit A from Laticauda semifasciata (Black-banded sea krait).